Here is a 490-residue protein sequence, read N- to C-terminus: AP-5 complex subunit mu-1 (490 aa).

One can recognise an MHD domain in the interval 206–476 (KPQVSISITE…LISSDYYIWN (271 aa)).

Belongs to the adaptor complexes medium subunit family. Probably part of the adaptor protein complex 5 (AP-5) a tetramer composed of AP5B1, AP5M1, AP5S1 and AP5Z1.

Its subcellular location is the cytoplasm. It localises to the cytosol. The protein resides in the late endosome membrane. It is found in the lysosome membrane. As part of AP-5, a probable fifth adaptor protein complex it may be involved in endosomal transport. The polypeptide is AP-5 complex subunit mu-1 (AP5M1) (Macaca fascicularis (Crab-eating macaque)).